We begin with the raw amino-acid sequence, 656 residues long: Putative L-type lectin-domain containing receptor kinase V.2 (656 aa).

The N-terminal stretch at 1–23 (MSLLLKMLLFSLFFFYMASISQC) is a signal peptide. Residues 24–276 (SDPTGGQFSF…EDQERSLSSK (253 aa)) are Extracellular-facing. The interval 29–248 (GQFSFNGYLY…SHYILGWSFN (220 aa)) is legume-lectin like. Residues Asn78, Asn124, Asn159, Asn190, and Asn257 are each glycosylated (N-linked (GlcNAc...) asparagine). A helical membrane pass occupies residues 277 to 297 (ILAISLSISGVTLVIVLILGV). Over 298 to 656 (MLFLKRKKFL…MTESFLSSGR (359 aa)) the chain is Cytoplasmic. A Protein kinase domain is found at 334 to 615 (FKNSEVLGKG…GVATLPHNLL (282 aa)). ATP is bound by residues 340-348 (LGKGGFGKV) and Lys363. Catalysis depends on Asp459, which acts as the Proton acceptor.

The protein in the C-terminal section; belongs to the protein kinase superfamily. Ser/Thr protein kinase family. It in the N-terminal section; belongs to the leguminous lectin family.

It localises to the cell membrane. It carries out the reaction L-seryl-[protein] + ATP = O-phospho-L-seryl-[protein] + ADP + H(+). It catalyses the reaction L-threonyl-[protein] + ATP = O-phospho-L-threonyl-[protein] + ADP + H(+). The sequence is that of Putative L-type lectin-domain containing receptor kinase V.2 (LECRK52) from Arabidopsis thaliana (Mouse-ear cress).